A 591-amino-acid chain; its full sequence is Pyruvate kinase 2 (591 aa).

Arg-38 contacts substrate. 3 residues coordinate K(+): Asn-40, Ser-42, and Asp-72. 40–43 (NFSH) contributes to the ATP binding site. Arg-79 and Lys-164 together coordinate ATP. Position 229 (Glu-229) interacts with Mg(2+). Gly-252, Asp-253, and Thr-285 together coordinate substrate. Asp-253 provides a ligand contact to Mg(2+).

The protein belongs to the pyruvate kinase family. It in the C-terminal section; belongs to the PEP-utilizing enzyme family. Homotetramer. The cofactor is Mg(2+). K(+) is required as a cofactor.

It catalyses the reaction pyruvate + ATP = phosphoenolpyruvate + ADP + H(+). It functions in the pathway carbohydrate degradation; glycolysis; pyruvate from D-glyceraldehyde 3-phosphate: step 5/5. The chain is Pyruvate kinase 2 (pyk2) from Synechocystis sp. (strain ATCC 27184 / PCC 6803 / Kazusa).